A 61-amino-acid polypeptide reads, in one-letter code: Metallothionein-2E (61 aa).

At methionine 1 the chain carries N-acetylmethionine. The tract at residues 1 to 29 (MDPNCSCATRDSCACASSCKCKECKCTSC) is beta. Residues cysteine 5, cysteine 7, cysteine 13, cysteine 15, cysteine 19, cysteine 21, cysteine 24, cysteine 26, cysteine 29, cysteine 33, cysteine 34, cysteine 36, cysteine 37, cysteine 41, cysteine 44, cysteine 48, cysteine 50, cysteine 57, cysteine 59, and cysteine 60 each coordinate a divalent metal cation. Residues 30 to 61 (KKSCCSCCPAGCTKCAQGCICKGALDKCSCCA) form an alpha region.

It belongs to the metallothionein superfamily. Type 1 family. As to quaternary structure, monomer.

Functionally, metallothioneins have a high content of cysteine residues that bind various heavy metals; these proteins are transcriptionally regulated by both heavy metals and glucocorticoids. The polypeptide is Metallothionein-2E (Oryctolagus cuniculus (Rabbit)).